The chain runs to 416 residues: MAEPRDTVVLAYSGGLDTSCILVWLKEQGYTVIAFLANIGQTEDFDAAQKKALALGAKKVYIQDVCREFVEDFIWPAVRANALYEDRYMLGSALARPCIARHLVLIAQEEGARYIAHGATGKGNDQVRFELGCYALCPSIKVIAPWRMPEFYQRFPGRRELMEYAQKHGIPVPVTPKAPWSMDENLMHISYEAGILENPKNRAPLDLYTKTCNPTTSPDVPDELEIEFEKGVPVKVTNTRNGVTHRSALELFVYLNDIASKHGVGRVDIVENRFVGMKSRGIYETPAGTILYHAHLDIEAFTMDREVRKIKQGLSLKFSELVYNGFWYSPECEFLKHCIARSQQAVAGTVHVSVFKGQVYVLGRESPHSLYNEELVSMDVQGDYEPADATGFININALRLKEYHRLQSKVSTKQDE.

Residues 11-19 (AYSGGLDTS) and Ala37 contribute to the ATP site. An L-citrulline-binding site is contributed by Tyr88. Residues Tyr88 and Tyr114 each carry the phosphotyrosine modification. 116 to 124 (AHGATGKGN) provides a ligand contact to ATP. L-aspartate contacts are provided by Thr120, Asn124, and Asp125. Asn124 serves as a coordination point for L-citrulline. The L-citrulline site is built by Arg128, Ser181, Ser190, Glu271, and Tyr283. Position 181 is a phosphoserine (Ser181).

This sequence belongs to the argininosuccinate synthase family. Homotetramer.

Its subcellular location is the cytoplasm. The protein resides in the cytosol. It carries out the reaction L-citrulline + L-aspartate + ATP = 2-(N(omega)-L-arginino)succinate + AMP + diphosphate + H(+). The protein operates within amino-acid biosynthesis; L-arginine biosynthesis; L-arginine from L-ornithine and carbamoyl phosphate: step 2/3. Its pathway is nitrogen metabolism; urea cycle; (N(omega)-L-arginino)succinate from L-aspartate and L-citrulline: step 1/1. One of the enzymes of the urea cycle, the metabolic pathway transforming neurotoxic amonia produced by protein catabolism into inocuous urea in the liver of ureotelic animals. Catalyzes the formation of arginosuccinate from aspartate, citrulline and ATP and together with ASL it is responsible for the biosynthesis of arginine in most body tissues. This chain is Argininosuccinate synthase, found in Gallus gallus (Chicken).